The primary structure comprises 285 residues: Foldase protein PrsA 2 (285 aa).

An N-terminal signal peptide occupies residues 1–20 (MRGKHIFIITALISILMLAA). Cys-21 is lipidated: N-palmitoyl cysteine. Cys-21 is lipidated: S-diacylglycerol cysteine. Positions 134 to 224 (KPEIKASHIL…NGYHIIKLTG (91 aa)) constitute a PpiC domain.

This sequence belongs to the PrsA family.

The protein resides in the cell membrane. The catalysed reaction is [protein]-peptidylproline (omega=180) = [protein]-peptidylproline (omega=0). In terms of biological role, plays a major role in protein secretion by helping the post-translocational extracellular folding of several secreted proteins. Important for the secretion of the protective antigen. The three PsrA proteins in this organism show different but overlapping substrate specificities. This Bacillus anthracis protein is Foldase protein PrsA 2 (prsA2).